Here is an 86-residue protein sequence, read N- to C-terminus: UPF0291 protein LBA1279 (86 aa).

Basic and acidic residues-rich tracts occupy residues 1-27 (MNKD…KENE) and 65-75 (NGKEVTSEKAK). Disordered stretches follow at residues 1–36 (MNKD…EEEE) and 65–86 (NGKE…LRKD). The segment covering 76–86 (QAQRKKGLRKD) has biased composition (basic residues).

It belongs to the UPF0291 family.

Its subcellular location is the cytoplasm. The protein is UPF0291 protein LBA1279 of Lactobacillus acidophilus (strain ATCC 700396 / NCK56 / N2 / NCFM).